Reading from the N-terminus, the 150-residue chain is Large ribosomal subunit protein bL9 (150 aa).

The protein belongs to the bacterial ribosomal protein bL9 family.

Binds to the 23S rRNA. The protein is Large ribosomal subunit protein bL9 of Burkholderia multivorans (strain ATCC 17616 / 249).